A 153-amino-acid chain; its full sequence is Insulin-like growth factor 1.S (153 aa).

4 cysteine pairs are disulfide-bonded: Cys-29/Cys-38, Cys-54/Cys-96, Cys-66/Cys-109, and Cys-100/Cys-109. Positions 49 to 77 (GPETLCGAELVDTLQFVCGDRGFYFSKPT) are b. The segment at 78 to 89 (GYGSNNRRSHHR) is c. Residues 90–110 (GIVDECCFQSCDFRRLEMYCA) form an a region. The interval 111–118 (PAKQAKSA) is d. A propeptide spans 119 to 153 (RSVRTQRHTDMPKAQKEVHPKNTSRGNTGSRGFRM) (e peptide). Residues 119 to 153 (RSVRTQRHTDMPKAQKEVHPKNTSRGNTGSRGFRM) are disordered. The span at 125-138 (RHTDMPKAQKEVHP) shows a compositional bias: basic and acidic residues. Residues 139-153 (KNTSRGNTGSRGFRM) show a composition bias toward polar residues.

Belongs to the insulin family. As to expression, expressed in adult liver, lung, heart, kidney and peritoneal fat.

The protein resides in the secreted. The insulin-like growth factors, isolated from plasma, are structurally and functionally related to insulin but have a much higher growth-promoting activity. Promotes head development by inhibiting Wnt signaling during embryogenesis. Acts as a ligand for IGF1R. Binds to the alpha subunit of IGF1R, leading to the activation of the intrinsic tyrosine kinase activity which autophosphorylates tyrosine residues in the beta subunit thus initiatiating a cascade of down-stream signaling events leading to activation of the PI3K-AKT/PKB and the Ras-MAPK pathways. Binds to integrins. Its binding to integrins and subsequent ternary complex formation with integrins and IGFR1 are essential for IGF1 signaling. This chain is Insulin-like growth factor 1.S, found in Xenopus laevis (African clawed frog).